We begin with the raw amino-acid sequence, 300 residues long: Acetylglutamate kinase (300 aa).

Substrate contacts are provided by residues 73–74 (GG), Arg95, and Asn197.

This sequence belongs to the acetylglutamate kinase family. ArgB subfamily.

It localises to the cytoplasm. It carries out the reaction N-acetyl-L-glutamate + ATP = N-acetyl-L-glutamyl 5-phosphate + ADP. The protein operates within amino-acid biosynthesis; L-arginine biosynthesis; N(2)-acetyl-L-ornithine from L-glutamate: step 2/4. In terms of biological role, catalyzes the ATP-dependent phosphorylation of N-acetyl-L-glutamate. The protein is Acetylglutamate kinase of Bordetella bronchiseptica (strain ATCC BAA-588 / NCTC 13252 / RB50) (Alcaligenes bronchisepticus).